The following is a 149-amino-acid chain: 17 kDa major membrane protein (149 aa).

The signal sequence occupies residues 1–19 (MKKIIKLSLLSLSIAGLAS). Residue C20 is the site of N-palmitoyl cysteine attachment. C20 carries S-diacylglycerol cysteine lipidation.

The protein resides in the cell outer membrane. The sequence is that of 17 kDa major membrane protein from Francisella tularensis subsp. holarctica (strain LVS).